We begin with the raw amino-acid sequence, 552 residues long: Dihydroxy-acid dehydratase (552 aa).

Asp-78 contributes to the Mg(2+) binding site. Residue Cys-119 participates in [2Fe-2S] cluster binding. 2 residues coordinate Mg(2+): Asp-120 and Lys-121. Lys-121 carries the post-translational modification N6-carboxylysine. Cys-191 serves as a coordination point for [2Fe-2S] cluster. Glu-442 provides a ligand contact to Mg(2+). The Proton acceptor role is filled by Ser-468.

It belongs to the IlvD/Edd family. In terms of assembly, homodimer. The cofactor is [2Fe-2S] cluster. It depends on Mg(2+) as a cofactor.

The catalysed reaction is (2R)-2,3-dihydroxy-3-methylbutanoate = 3-methyl-2-oxobutanoate + H2O. It carries out the reaction (2R,3R)-2,3-dihydroxy-3-methylpentanoate = (S)-3-methyl-2-oxopentanoate + H2O. It functions in the pathway amino-acid biosynthesis; L-isoleucine biosynthesis; L-isoleucine from 2-oxobutanoate: step 3/4. Its pathway is amino-acid biosynthesis; L-valine biosynthesis; L-valine from pyruvate: step 3/4. In terms of biological role, functions in the biosynthesis of branched-chain amino acids. Catalyzes the dehydration of (2R,3R)-2,3-dihydroxy-3-methylpentanoate (2,3-dihydroxy-3-methylvalerate) into 2-oxo-3-methylpentanoate (2-oxo-3-methylvalerate) and of (2R)-2,3-dihydroxy-3-methylbutanoate (2,3-dihydroxyisovalerate) into 2-oxo-3-methylbutanoate (2-oxoisovalerate), the penultimate precursor to L-isoleucine and L-valine, respectively. The sequence is that of Dihydroxy-acid dehydratase from Caldicellulosiruptor bescii (strain ATCC BAA-1888 / DSM 6725 / KCTC 15123 / Z-1320) (Anaerocellum thermophilum).